Reading from the N-terminus, the 315-residue chain is N-acetylneuraminate lyase (315 aa).

Residues Ser-59 and Ser-60 each coordinate aceneuramate. The Proton donor role is filled by Tyr-149. Lys-177 serves as the catalytic Schiff-base intermediate with substrate. Positions 179, 202, 204, 205, and 221 each coordinate aceneuramate.

Belongs to the DapA family. NanA subfamily. Homotetramer.

Its subcellular location is the cytoplasm. The enzyme catalyses aceneuramate = aldehydo-N-acetyl-D-mannosamine + pyruvate. The protein operates within amino-sugar metabolism; N-acetylneuraminate degradation; D-fructose 6-phosphate from N-acetylneuraminate: step 1/5. Functionally, catalyzes the reversible aldol cleavage of N-acetylneuraminic acid (sialic acid; Neu5Ac) to form pyruvate and N-acetylmannosamine (ManNAc) via a Schiff base intermediate. Cannot use 2,7-anhydro-Neu5Ac. Involved in the degradation of sialic acid, which is present in the host mucus layer and represents a much-coveted source of nutrients for R.gnavus, a prevalent member of the normal gut microbiota. This Mediterraneibacter gnavus (strain ATCC 29149 / DSM 114966 / JCM 6515 / VPI C7-9) (Ruminococcus gnavus) protein is N-acetylneuraminate lyase.